The chain runs to 102 residues: Small ribosomal subunit protein uS10 (102 aa).

This sequence belongs to the universal ribosomal protein uS10 family. As to quaternary structure, part of the 30S ribosomal subunit.

Its function is as follows. Involved in the binding of tRNA to the ribosomes. The protein is Small ribosomal subunit protein uS10 of Clostridium novyi (strain NT).